We begin with the raw amino-acid sequence, 102 residues long: PqqA binding protein (102 aa).

This sequence belongs to the PqqD family. Monomer. Interacts with PqqE.

Its pathway is cofactor biosynthesis; pyrroloquinoline quinone biosynthesis. In terms of biological role, functions as a PqqA binding protein and presents PqqA to PqqE, in the pyrroloquinoline quinone (PQQ) biosynthetic pathway. This Rhodopseudomonas palustris (strain ATCC BAA-98 / CGA009) protein is PqqA binding protein.